A 526-amino-acid chain; its full sequence is Probable carboxypeptidase 2 (526 aa).

The signal sequence occupies residues 1-21 (MVAYRLLALISLGLGSHCASA). N-linked (GlcNAc...) asparagine glycosylation occurs at N46. Residues 53–76 (PAFTSPGTVPRGFSDGTSGPTRDE) are disordered. The Peptidase M14 domain occupies 71 to 351 (GPTRDETMEG…VMAKSILQTA (281 aa)). A glycan (N-linked (GlcNAc...) asparagine) is linked at N116. 3 residues coordinate Zn(2+): H136, E139, and H224. The active-site Proton donor/acceptor is E322. 2 N-linked (GlcNAc...) asparagine glycosylation sites follow: N393 and N459.

It belongs to the peptidase M14 family. The cofactor is Zn(2+).

The protein resides in the secreted. Its function is as follows. Extracellular metalloprotease that contributes to pathogenicity. This is Probable carboxypeptidase 2 (MCPB) from Arthroderma benhamiae (strain ATCC MYA-4681 / CBS 112371) (Trichophyton mentagrophytes).